The sequence spans 364 residues: MWIKELQLRNFRNYGTVDTEFSPGLNVFIGNNAQGKTNFLEAIYFLALTRSHRTRTDKELIQFSKNNLQLIGKLNRISGALSLELQLSDKGRITKINALKQARLSDYIGTMMVVLFAPEDLQLIKGAPSLRRKFIDIDLGQIKPIYLSDLSNYNYVLKQRNTYLKTISTINSDFLSVLDEQLADYGSKVIKHRIDFIGELTREANKHHEAISNGLESLIITYESSVTQQDHQTIKEAFLLNLQKNRQRDIFKKNTSIGPHRDDIHFFINDMNANFASQGQHRSLILSLKMAEVSLMKEMTGDNPILLLDDVMSELDNTRQIKLLETVINENVQTFITTTSLDHLLHLPDKIKTFHVNQGTLKAD.

An ATP-binding site is contributed by 30 to 37 (GNNAQGKT).

It belongs to the RecF family.

The protein localises to the cytoplasm. Functionally, the RecF protein is involved in DNA metabolism; it is required for DNA replication and normal SOS inducibility. RecF binds preferentially to single-stranded, linear DNA. It also seems to bind ATP. The polypeptide is DNA replication and repair protein RecF (Streptococcus uberis (strain ATCC BAA-854 / 0140J)).